A 265-amino-acid polypeptide reads, in one-letter code: 3-deoxy-manno-octulosonate cytidylyltransferase 2 (265 aa).

This sequence belongs to the KdsB family.

It localises to the cytoplasm. The catalysed reaction is 3-deoxy-alpha-D-manno-oct-2-ulosonate + CTP = CMP-3-deoxy-beta-D-manno-octulosonate + diphosphate. The protein operates within nucleotide-sugar biosynthesis; CMP-3-deoxy-D-manno-octulosonate biosynthesis; CMP-3-deoxy-D-manno-octulosonate from 3-deoxy-D-manno-octulosonate and CTP: step 1/1. It functions in the pathway bacterial outer membrane biogenesis; lipopolysaccharide biosynthesis. Activates KDO (a required 8-carbon sugar) for incorporation into bacterial lipopolysaccharide in Gram-negative bacteria. The chain is 3-deoxy-manno-octulosonate cytidylyltransferase 2 from Burkholderia lata (strain ATCC 17760 / DSM 23089 / LMG 22485 / NCIMB 9086 / R18194 / 383).